Here is a 287-residue protein sequence, read N- to C-terminus: NAD kinase (287 aa).

Residue D56 is the Proton acceptor of the active site. NAD(+) contacts are provided by residues 56-57, R61, 128-129, and D156; these read DG and ND.

The protein belongs to the NAD kinase family. Requires a divalent metal cation as cofactor.

The protein resides in the cytoplasm. The catalysed reaction is NAD(+) + ATP = ADP + NADP(+) + H(+). Its function is as follows. Involved in the regulation of the intracellular balance of NAD and NADP, and is a key enzyme in the biosynthesis of NADP. Catalyzes specifically the phosphorylation on 2'-hydroxyl of the adenosine moiety of NAD to yield NADP. The chain is NAD kinase from Thermomicrobium roseum (strain ATCC 27502 / DSM 5159 / P-2).